A 314-amino-acid polypeptide reads, in one-letter code: Olfactory receptor 5P6 (314 aa).

The Extracellular portion of the chain corresponds to 1–28; that stretch reads MAFQEDGNHTAVTEFVLFGLTDDPVLRV. N-linked (GlcNAc...) asparagine glycosylation is present at N8. A helical membrane pass occupies residues 29–49; the sequence is ILFIIFLCIYLVTVSGNLSTI. Over 50–57 the chain is Cytoplasmic; it reads LLIRVSSQ. Residues 58-78 traverse the membrane as a helical segment; that stretch reads LHHPMYFFLSHLAFADIGYSS. Topologically, residues 79-102 are extracellular; that stretch reads SVTPNMLVNFLVERHTISYIGCAI. C100 and C192 are joined by a disulfide. A helical membrane pass occupies residues 103 to 123; sequence QLGSVVFFGSSECFILAAMAY. At 124–136 the chain is on the cytoplasmic side; sequence DRFMAICNPLLYS. A helical membrane pass occupies residues 137–157; the sequence is TKMSTQVCVQLLLIAYIGGFL. Residues 158 to 199 are Extracellular-facing; sequence NTWSFTICFYSLVFCGPNGVNHFFCDFAPLIELSCSDVSVPA. The chain crosses the membrane as a helical span at residues 200–220; the sequence is TVPSFTAGSIIVVTVIVIAIS. Over 221 to 240 the chain is Cytoplasmic; sequence YIYILITILKMHSTEGRQKA. A helical transmembrane segment spans residues 241–261; it reads FSTCTSHLTAVTLFYGTITFI. Residues 262-274 are Extracellular-facing; the sequence is YVMPKSSFSTDQN. A helical membrane pass occupies residues 275-295; sequence KVVSVFYMVVIPMLNPLIYSL. Over 296–314 the chain is Cytoplasmic; it reads RNNEIKGALKRQIGRKIFS.

The protein belongs to the G-protein coupled receptor 1 family.

It is found in the cell membrane. Functionally, potential odorant receptor. This is Olfactory receptor 5P6 from Mus musculus (Mouse).